The primary structure comprises 390 residues: Phosphopentomutase (390 aa).

Mn(2+)-binding residues include aspartate 12, aspartate 284, histidine 289, aspartate 325, histidine 326, and histidine 337.

This sequence belongs to the phosphopentomutase family. The cofactor is Mn(2+).

It localises to the cytoplasm. It carries out the reaction 2-deoxy-alpha-D-ribose 1-phosphate = 2-deoxy-D-ribose 5-phosphate. The enzyme catalyses alpha-D-ribose 1-phosphate = D-ribose 5-phosphate. Its pathway is carbohydrate degradation; 2-deoxy-D-ribose 1-phosphate degradation; D-glyceraldehyde 3-phosphate and acetaldehyde from 2-deoxy-alpha-D-ribose 1-phosphate: step 1/2. Its function is as follows. Isomerase that catalyzes the conversion of deoxy-ribose 1-phosphate (dRib-1-P) and ribose 1-phosphate (Rib-1-P) to deoxy-ribose 5-phosphate (dRib-5-P) and ribose 5-phosphate (Rib-5-P), respectively. This Macrococcus caseolyticus (strain JCSC5402) (Macrococcoides caseolyticum) protein is Phosphopentomutase.